Here is a 259-residue protein sequence, read N- to C-terminus: Imidazole glycerol phosphate synthase subunit HisF (259 aa).

Catalysis depends on residues Asp11 and Asp130.

Belongs to the HisA/HisF family. Heterodimer of HisH and HisF.

It localises to the cytoplasm. It carries out the reaction 5-[(5-phospho-1-deoxy-D-ribulos-1-ylimino)methylamino]-1-(5-phospho-beta-D-ribosyl)imidazole-4-carboxamide + L-glutamine = D-erythro-1-(imidazol-4-yl)glycerol 3-phosphate + 5-amino-1-(5-phospho-beta-D-ribosyl)imidazole-4-carboxamide + L-glutamate + H(+). It functions in the pathway amino-acid biosynthesis; L-histidine biosynthesis; L-histidine from 5-phospho-alpha-D-ribose 1-diphosphate: step 5/9. Its function is as follows. IGPS catalyzes the conversion of PRFAR and glutamine to IGP, AICAR and glutamate. The HisF subunit catalyzes the cyclization activity that produces IGP and AICAR from PRFAR using the ammonia provided by the HisH subunit. This is Imidazole glycerol phosphate synthase subunit HisF from Polaromonas sp. (strain JS666 / ATCC BAA-500).